The following is a 386-amino-acid chain: Formate-dependent phosphoribosylglycinamide formyltransferase (386 aa).

Residues 15–16 (EL) and E75 contribute to the N(1)-(5-phospho-beta-D-ribosyl)glycinamide site. ATP is bound by residues R107, K148, 153–158 (SSGKGQ), 188–191 (EQFI), and E196. An ATP-grasp domain is found at 112–301 (ALAVQQLNLQ…EFELHLRAIV (190 aa)). Mg(2+)-binding residues include E260 and E272. N(1)-(5-phospho-beta-D-ribosyl)glycinamide contacts are provided by residues D279, K349, and 356–357 (RR).

The protein belongs to the PurK/PurT family. Homodimer.

It catalyses the reaction N(1)-(5-phospho-beta-D-ribosyl)glycinamide + formate + ATP = N(2)-formyl-N(1)-(5-phospho-beta-D-ribosyl)glycinamide + ADP + phosphate + H(+). Its pathway is purine metabolism; IMP biosynthesis via de novo pathway; N(2)-formyl-N(1)-(5-phospho-D-ribosyl)glycinamide from N(1)-(5-phospho-D-ribosyl)glycinamide (formate route): step 1/1. In terms of biological role, involved in the de novo purine biosynthesis. Catalyzes the transfer of formate to 5-phospho-ribosyl-glycinamide (GAR), producing 5-phospho-ribosyl-N-formylglycinamide (FGAR). Formate is provided by PurU via hydrolysis of 10-formyl-tetrahydrofolate. The protein is Formate-dependent phosphoribosylglycinamide formyltransferase of Francisella tularensis subsp. holarctica (strain LVS).